A 476-amino-acid polypeptide reads, in one-letter code: Aspartyl/glutamyl-tRNA(Asn/Gln) amidotransferase subunit B (476 aa).

This sequence belongs to the GatB/GatE family. GatB subfamily. As to quaternary structure, heterotrimer of A, B and C subunits.

The catalysed reaction is L-glutamyl-tRNA(Gln) + L-glutamine + ATP + H2O = L-glutaminyl-tRNA(Gln) + L-glutamate + ADP + phosphate + H(+). The enzyme catalyses L-aspartyl-tRNA(Asn) + L-glutamine + ATP + H2O = L-asparaginyl-tRNA(Asn) + L-glutamate + ADP + phosphate + 2 H(+). Functionally, allows the formation of correctly charged Asn-tRNA(Asn) or Gln-tRNA(Gln) through the transamidation of misacylated Asp-tRNA(Asn) or Glu-tRNA(Gln) in organisms which lack either or both of asparaginyl-tRNA or glutaminyl-tRNA synthetases. The reaction takes place in the presence of glutamine and ATP through an activated phospho-Asp-tRNA(Asn) or phospho-Glu-tRNA(Gln). This is Aspartyl/glutamyl-tRNA(Asn/Gln) amidotransferase subunit B from Clostridium botulinum (strain 657 / Type Ba4).